The following is a 635-amino-acid chain: Threonine--tRNA ligase (635 aa).

In terms of domain architecture, TGS spans 1–61; the sequence is MITVRLPDGS…EQDSDLSIIT (61 aa). Residues 242-533 form a catalytic region; that stretch reads DHRKLGRALD…LIENHAGALP (292 aa). 3 residues coordinate Zn(2+): cysteine 333, histidine 384, and histidine 510.

This sequence belongs to the class-II aminoacyl-tRNA synthetase family. As to quaternary structure, homodimer. It depends on Zn(2+) as a cofactor.

It is found in the cytoplasm. It catalyses the reaction tRNA(Thr) + L-threonine + ATP = L-threonyl-tRNA(Thr) + AMP + diphosphate + H(+). Functionally, catalyzes the attachment of threonine to tRNA(Thr) in a two-step reaction: L-threonine is first activated by ATP to form Thr-AMP and then transferred to the acceptor end of tRNA(Thr). Also edits incorrectly charged L-seryl-tRNA(Thr). The polypeptide is Threonine--tRNA ligase (Herminiimonas arsenicoxydans).